The sequence spans 1761 residues: Nonribosomal peptide synthetase 6 (1761 aa).

Residues 63 to 468 form an adenylation region; sequence ERAALHPEKI…GRQDQQVKLR (406 aa). The Carrier 1 domain occupies 600 to 675; that stretch reads EATTEMELKL…AMAEKAKPVS (76 aa). Ser636 bears the O-(pantetheine 4'-phosphoryl)serine mark. The tract at residues 712–1135 is condensation 1; it reads VEDVYPCTPL…AVLDPAEARD (424 aa). Carrier domains follow at residues 1169 to 1242 and 1237 to 1313; these read SPNE…SNER and SASN…EEEM. Ser1203 and Ser1274 each carry O-(pantetheine 4'-phosphoryl)serine. The segment at 1354-1677 is condensation 2; it reads IYPTRPLQQL…DKVQWFDTVV (324 aa).

The protein belongs to the NRP synthetase family.

The protein operates within siderophore biosynthesis. NRPS involved in extracellular coprogen-type siderophores biosynthesis including coprogen, neocoprogen I and neocoprogen II. The role of extracellular siderophores in fungal virulence to plants is to supply iron to the fungus during plant infection, but not to act as phytotoxins, depriving their hosts of iron. The polypeptide is Nonribosomal peptide synthetase 6 (Cochliobolus miyabeanus (Brown spot disease fungus)).